The following is a 1448-amino-acid chain: DNA-directed RNA polymerase subunit beta' (1448 aa).

Zn(2+) is bound by residues Cys-66, Cys-68, Cys-81, and Cys-84. Residues Asp-474, Asp-476, and Asp-478 each coordinate Mg(2+). Positions 814, 888, 895, and 898 each coordinate Zn(2+). Positions 1408 to 1448 are disordered; the sequence is LEELQAAIGGDGESPSGDGAAGDGAPSEEDVEQIEASGSEN.

The protein belongs to the RNA polymerase beta' chain family. The RNAP catalytic core consists of 2 alpha, 1 beta, 1 beta' and 1 omega subunit. When a sigma factor is associated with the core the holoenzyme is formed, which can initiate transcription. The cofactor is Mg(2+). Zn(2+) serves as cofactor.

It catalyses the reaction RNA(n) + a ribonucleoside 5'-triphosphate = RNA(n+1) + diphosphate. Functionally, DNA-dependent RNA polymerase catalyzes the transcription of DNA into RNA using the four ribonucleoside triphosphates as substrates. This Salinibacter ruber (strain DSM 13855 / M31) protein is DNA-directed RNA polymerase subunit beta'.